A 359-amino-acid polypeptide reads, in one-letter code: Aflatoxin B1 aldehyde reductase member 2 (359 aa).

Residues 1–38 (MLSAASRVVSRAAVHCALRSPPPEARALAMSRPPPPRV) constitute a mitochondrion transit peptide. Serine 40 bears the Phosphoserine mark. Aspartate 72 provides a ligand contact to NADP(+). Tyrosine 77 acts as the Proton donor in catalysis. Lysine 128 is modified (N6-acetyllysine). Histidine 141 lines the substrate pocket. NADP(+) is bound by residues 171 to 172 (SN), glutamine 197, 226 to 236 (NPLAGGLLTGK), and arginine 250. Lysine 236 is modified (N6-succinyllysine). Residue serine 255 is modified to Phosphoserine. Residues tyrosine 260 and arginine 263 each coordinate substrate. NADP(+) is bound at residue 318-326 (SSLEQLEQN). Arginine 359 contributes to the substrate binding site.

The protein belongs to the aldo/keto reductase family. Aldo/keto reductase 2 subfamily. Homodimer. Detected in brain, liver, small intestine and testis, and at lower levels in heart, prostate, skeletal muscle and spleen. Detected in kidney proximal and distal tubules, endothelial cells lining the Bowman's capsules and some cysts. Detected at low levels in lung and pancreas (at protein level). Widely expressed.

The protein resides in the mitochondrion. It localises to the golgi apparatus. The protein localises to the cytoplasm. It carries out the reaction 4-hydroxybutanoate + NADP(+) = succinate semialdehyde + NADPH + H(+). In terms of biological role, catalyzes the NADPH-dependent reduction of succinic semialdehyde to gamma-hydroxybutyrate. May have an important role in producing the neuromodulator gamma-hydroxybutyrate (GHB). Has broad substrate specificity. Has NADPH-dependent aldehyde reductase activity towards 2-carboxybenzaldehyde, 2-nitrobenzaldehyde and pyridine-2-aldehyde (in vitro). Can reduce 1,2-naphthoquinone and 9,10-phenanthrenequinone (in vitro). Can reduce the dialdehyde protein-binding form of aflatoxin B1 (AFB1) to the non-binding AFB1 dialcohol. May be involved in protection of liver against the toxic and carcinogenic effects of AFB1, a potent hepatocarcinogen. In Homo sapiens (Human), this protein is Aflatoxin B1 aldehyde reductase member 2 (AKR7A2).